The primary structure comprises 321 residues: Cytochrome c biogenesis protein CcsA (321 aa).

The next 7 membrane-spanning stretches (helical) occupy residues 9 to 29 (ILTHISFSTISIVITIHLITL), 44 to 64 (GMIATFFCITGFLVSRWASSG), 68 to 88 (LSNLYESLIFLSWALYILHMI), 143 to 163 (MLLSYATLLCGSLLSAALLMI), 226 to 246 (VISLGFTLLTIGILCGAVWAN), 260 to 274 (TWAFITWTIFAIYLH), and 289 to 309 (VASIGFLIIWICYFGINLLGI).

This sequence belongs to the CcmF/CycK/Ccl1/NrfE/CcsA family. As to quaternary structure, may interact with Ccs1.

The protein localises to the plastid. It localises to the chloroplast thylakoid membrane. In terms of biological role, required during biogenesis of c-type cytochromes (cytochrome c6 and cytochrome f) at the step of heme attachment. This chain is Cytochrome c biogenesis protein CcsA, found in Oryza sativa (Rice).